Consider the following 70-residue polypeptide: uncharacterized protein (70 aa).

Residues 15-37 traverse the membrane as a helical segment; that stretch reads IFAFLLFRLCKFCCVFCCALCNV.

The protein localises to the membrane. This is an uncharacterized protein from Dictyostelium discoideum (Social amoeba).